The following is a 280-amino-acid chain: NAD(P)H-quinone oxidoreductase subunit K, chloroplastic (280 aa).

Residues C65, C66, C130, and C161 each contribute to the [4Fe-4S] cluster site. A disordered region spans residues 257–280; the sequence is LLKDWKQSNQKQEQNVKMMKEEEA.

The protein belongs to the complex I 20 kDa subunit family. NDH is composed of at least 16 different subunits, 5 of which are encoded in the nucleus. [4Fe-4S] cluster serves as cofactor.

The protein resides in the plastid. It localises to the chloroplast thylakoid membrane. The enzyme catalyses a plastoquinone + NADH + (n+1) H(+)(in) = a plastoquinol + NAD(+) + n H(+)(out). The catalysed reaction is a plastoquinone + NADPH + (n+1) H(+)(in) = a plastoquinol + NADP(+) + n H(+)(out). In terms of biological role, NDH shuttles electrons from NAD(P)H:plastoquinone, via FMN and iron-sulfur (Fe-S) centers, to quinones in the photosynthetic chain and possibly in a chloroplast respiratory chain. The immediate electron acceptor for the enzyme in this species is believed to be plastoquinone. Couples the redox reaction to proton translocation, and thus conserves the redox energy in a proton gradient. This chain is NAD(P)H-quinone oxidoreductase subunit K, chloroplastic, found in Staurastrum punctulatum (Green alga).